The sequence spans 320 residues: Protease HtpX homolog (320 aa).

Helical transmembrane passes span 6 to 26 (TAML…LIGG) and 28 to 48 (AGMM…YWNS). His130 contacts Zn(2+). Glu131 is a catalytic residue. His134 is a Zn(2+) binding site. 2 helical membrane-spanning segments follow: residues 145-165 (ITAT…FFGG) and 173-193 (PLGF…AMLV). Position 202 (Glu202) interacts with Zn(2+). The disordered stretch occupies residues 283-320 (MNVSTSPARAANPSRKSRSVPDTGLGRGGSQPPKGPWS).

This sequence belongs to the peptidase M48B family. It depends on Zn(2+) as a cofactor.

The protein resides in the cell inner membrane. The chain is Protease HtpX homolog from Rhizobium johnstonii (strain DSM 114642 / LMG 32736 / 3841) (Rhizobium leguminosarum bv. viciae).